We begin with the raw amino-acid sequence, 590 residues long: Dystrobrevin-1 (590 aa).

Gly residues predominate over residues 1-10 (MLWSNGGGGP). Residues 1–25 (MLWSNGGGGPREPSSAPSPDHHRAM) are disordered. A ZZ-type zinc finger spans residues 259-315 (YHPVVCDACQVRSFTGFRYKCQRCANYQLCQSCFWRGRTSQNHSNEHEMKEYSSYKS). Residues Cys-264, Cys-267, Cys-279, Cys-282, Cys-288, Cys-291, His-301, and His-305 each contribute to the Zn(2+) site. A coiled-coil region spans residues 434–508 (SMVGDERTLI…EHLMAQLNTG (75 aa)). Positions 468-590 (DGLAGLRDRK…DENGVTINGF (123 aa)) are essential for interaction with ctn-1. Residues 484-490 (MFEMQQR) form an essential for interaction with dys-1 region.

Belongs to the dystrophin family. Dystrobrevin subfamily. Component of the dystrophin glycoprotein complex (DGC). Interacts with dystrophin (dys-1) and syntrophin (stn-1) to form the DGC. Interacts (via C-terminus) with ctn-1 (via N-terminus); the interaction is required for localization of the dystrophin complex and ctn-1 near dense bodies in muscle cells. From late embryogenesis to adulthood, expressed in neurons and muscles; particularly strong in the ventral nerve cord and in muscles of the body wall, head pharyngeal, and vulva; weaker in the intestinal muscle (at protein level).

The protein resides in the cytoplasm. Functionally, plays a role in cholinergic transmission and as a functional partner of dystrophin (dys-1), necessary for muscle maintenance. Required for localization of ctn-1 near dense bodies in muscle cells. The chain is Dystrobrevin-1 from Caenorhabditis elegans.